Consider the following 255-residue polypeptide: Superoxide dismutase [Fe] 2, chloroplastic (255 aa).

The transit peptide at 1–32 (MAAFASALRVLPSPPAAVPRRLRSREQRQGCR) directs the protein to the chloroplast. Fe cation-binding residues include H67, H119, D203, and H207.

It belongs to the iron/manganese superoxide dismutase family. As to quaternary structure, homodimer. It depends on Fe cation as a cofactor. In terms of tissue distribution, strongly expressed in the stems of the young seedlings, etiolated seedlings and embryogenic calli, but only minimally expressed in the leaves and the roots.

Its subcellular location is the plastid. The protein localises to the chloroplast. The enzyme catalyses 2 superoxide + 2 H(+) = H2O2 + O2. Functionally, destroys superoxide anion radicals which are normally produced within the cells and which are toxic to biological systems. This Oryza sativa subsp. japonica (Rice) protein is Superoxide dismutase [Fe] 2, chloroplastic.